Here is a 200-residue protein sequence, read N- to C-terminus: ATP-dependent Clp protease proteolytic subunit (200 aa).

The Nucleophile role is filled by S97. H122 is a catalytic residue.

Belongs to the peptidase S14 family. As to quaternary structure, fourteen ClpP subunits assemble into 2 heptameric rings which stack back to back to give a disk-like structure with a central cavity, resembling the structure of eukaryotic proteasomes.

The protein localises to the cytoplasm. The catalysed reaction is Hydrolysis of proteins to small peptides in the presence of ATP and magnesium. alpha-casein is the usual test substrate. In the absence of ATP, only oligopeptides shorter than five residues are hydrolyzed (such as succinyl-Leu-Tyr-|-NHMec, and Leu-Tyr-Leu-|-Tyr-Trp, in which cleavage of the -Tyr-|-Leu- and -Tyr-|-Trp bonds also occurs).. Cleaves peptides in various proteins in a process that requires ATP hydrolysis. Has a chymotrypsin-like activity. Plays a major role in the degradation of misfolded proteins. The polypeptide is ATP-dependent Clp protease proteolytic subunit (Oleidesulfovibrio alaskensis (strain ATCC BAA-1058 / DSM 17464 / G20) (Desulfovibrio alaskensis)).